The sequence spans 462 residues: 3-oxoacyl-[acyl-carrier-protein] synthase I, chloroplastic (462 aa).

Residues 1 to 35 (MHAHAAHALGLRVPPPAFPRRRARPRRRPAAAVLA) constitute a chloroplast transit peptide. Positions 1 to 45 (MHAHAAHALGLRVPPPAFPRRRARPRRRPAAAVLATSAAPQRETD) are disordered. A compositionally biased stretch (basic residues) spans 19 to 29 (PRRRARPRRRP). A compositionally biased stretch (low complexity) spans 30–39 (AAAVLATSAA). One can recognise a Ketosynthase family 3 (KS3) domain in the interval 47–459 (RKRVVITGMG…GHNSVVVFAP (413 aa)). Residues Cys213, His353, and His389 each act as for beta-ketoacyl synthase activity in the active site.

The protein belongs to the thiolase-like superfamily. Beta-ketoacyl-ACP synthases family. In terms of assembly, homodimer.

The protein localises to the plastid. Its subcellular location is the chloroplast. It catalyses the reaction a fatty acyl-[ACP] + malonyl-[ACP] + H(+) = a 3-oxoacyl-[ACP] + holo-[ACP] + CO2. Catalyzes the condensation reaction of fatty acid synthesis by the addition to an acyl acceptor of two carbons from malonyl-ACP. Specific for elongation from C-10 to unsaturated C-16 and C-18 fatty acids. This is 3-oxoacyl-[acyl-carrier-protein] synthase I, chloroplastic (KAS12) from Hordeum vulgare (Barley).